The primary structure comprises 131 residues: MPFWFGVAVGGALGALARYGVSLLVAGRLASTAWGNFPLATLLVNVLGSFLLAFITTLALRGLVSPAWRLAVGTGFIGALTTFSTFAWESDLMVRDGEAARASLYVLGNLVLGYAAVLLGRALAARLGGGA.

4 helical membrane-spanning segments follow: residues 5 to 25, 39 to 59, 70 to 90, and 104 to 124; these read FGVA…SLLV, LATL…TTLA, LAVG…AWES, and LYVL…RALA. Na(+) is bound by residues Gly78 and Thr81.

The protein belongs to the fluoride channel Fluc/FEX (TC 1.A.43) family.

The protein localises to the cell membrane. The enzyme catalyses fluoride(in) = fluoride(out). With respect to regulation, na(+) is not transported, but it plays an essential structural role and its presence is essential for fluoride channel function. Functionally, fluoride-specific ion channel. Important for reducing fluoride concentration in the cell, thus reducing its toxicity. The chain is Fluoride-specific ion channel FluC 2 from Deinococcus geothermalis (strain DSM 11300 / CIP 105573 / AG-3a).